Consider the following 290-residue polypeptide: 6-phospho-5-dehydro-2-deoxy-D-gluconate aldolase (290 aa).

D85 acts as the Proton donor in catalysis. H86 and H180 together coordinate Zn(2+). G181 is a binding site for dihydroxyacetone phosphate. H208 lines the Zn(2+) pocket. Dihydroxyacetone phosphate-binding positions include 209–211 (GAS) and 230–233 (NINT). T233 is modified (phosphothreonine).

The protein belongs to the class II fructose-bisphosphate aldolase family. IolJ subfamily. The cofactor is Zn(2+).

The catalysed reaction is 6-phospho-5-dehydro-2-deoxy-D-gluconate = 3-oxopropanoate + dihydroxyacetone phosphate. It participates in polyol metabolism; myo-inositol degradation into acetyl-CoA; acetyl-CoA from myo-inositol: step 6/7. Produces dihydroxyacetone phosphate (DHAP or glycerone phosphate) and malonic semialdehyde (MSA or 3-oxopropanoate) from 6-phospho-5-dehydro-2-deoxy-D-gluconate (DKGP). This Bacillus subtilis (strain 168) protein is 6-phospho-5-dehydro-2-deoxy-D-gluconate aldolase (iolJ).